A 302-amino-acid polypeptide reads, in one-letter code: Succinate--CoA ligase [ADP-forming] subunit alpha (302 aa).

Residues 17–20, Lys43, and 96–98 contribute to the CoA site; these read TGST and ITE. Residue Tyr159 participates in substrate binding. Residue His247 is the Tele-phosphohistidine intermediate of the active site.

This sequence belongs to the succinate/malate CoA ligase alpha subunit family. In terms of assembly, heterotetramer of two alpha and two beta subunits.

The catalysed reaction is succinate + ATP + CoA = succinyl-CoA + ADP + phosphate. It carries out the reaction GTP + succinate + CoA = succinyl-CoA + GDP + phosphate. It participates in carbohydrate metabolism; tricarboxylic acid cycle; succinate from succinyl-CoA (ligase route): step 1/1. In terms of biological role, succinyl-CoA synthetase functions in the citric acid cycle (TCA), coupling the hydrolysis of succinyl-CoA to the synthesis of either ATP or GTP and thus represents the only step of substrate-level phosphorylation in the TCA. The alpha subunit of the enzyme binds the substrates coenzyme A and phosphate, while succinate binding and nucleotide specificity is provided by the beta subunit. This chain is Succinate--CoA ligase [ADP-forming] subunit alpha, found in Staphylococcus aureus (strain COL).